Reading from the N-terminus, the 147-residue chain is Cell division protein SepF 1 (147 aa).

This sequence belongs to the SepF family. Homodimer. Interacts with FtsZ.

The protein localises to the cytoplasm. Its function is as follows. Cell division protein that is part of the divisome complex and is recruited early to the Z-ring. Probably stimulates Z-ring formation, perhaps through the cross-linking of FtsZ protofilaments. Its function overlaps with FtsA. The sequence is that of Cell division protein SepF 1 from Desulforamulus reducens (strain ATCC BAA-1160 / DSM 100696 / MI-1) (Desulfotomaculum reducens).